The sequence spans 244 residues: Acetoacetate decarboxylase (244 aa).

The active-site Schiff-base intermediate with acetoacetate is the K115.

This sequence belongs to the ADC family.

It catalyses the reaction acetoacetate + H(+) = acetone + CO2. Functionally, catalyzes the conversion of acetoacetate to acetone and carbon dioxide. This chain is Acetoacetate decarboxylase, found in Streptomyces nogalater.